A 669-amino-acid chain; its full sequence is UvrABC system protein B (669 aa).

The 158-residue stretch at 26–183 folds into the Helicase ATP-binding domain; the sequence is TNFHAGIAKQ…RHLTELQYTR (158 aa). Position 39 to 46 (39 to 46) interacts with ATP; sequence GVTGSGKT. Positions 92-115 match the Beta-hairpin motif; that stretch reads YYDYYQPEAYVPASDTFIEKDSSI. Positions 431 to 597 constitute a Helicase C-terminal domain; the sequence is QVDDLISQIN…SVVRPISDIL (167 aa). One can recognise a UVR domain in the interval 631-666; it reads AAQMKMLEQQMYQHARDLEFEDAARIRDQIQRLREA.

The protein belongs to the UvrB family. In terms of assembly, forms a heterotetramer with UvrA during the search for lesions. Interacts with UvrC in an incision complex.

The protein localises to the cytoplasm. Its function is as follows. The UvrABC repair system catalyzes the recognition and processing of DNA lesions. A damage recognition complex composed of 2 UvrA and 2 UvrB subunits scans DNA for abnormalities. Upon binding of the UvrA(2)B(2) complex to a putative damaged site, the DNA wraps around one UvrB monomer. DNA wrap is dependent on ATP binding by UvrB and probably causes local melting of the DNA helix, facilitating insertion of UvrB beta-hairpin between the DNA strands. Then UvrB probes one DNA strand for the presence of a lesion. If a lesion is found the UvrA subunits dissociate and the UvrB-DNA preincision complex is formed. This complex is subsequently bound by UvrC and the second UvrB is released. If no lesion is found, the DNA wraps around the other UvrB subunit that will check the other stand for damage. This Xylella fastidiosa (strain M12) protein is UvrABC system protein B.